Reading from the N-terminus, the 387-residue chain is Patatin-05 (387 aa).

The N-terminal stretch at 1–23 (MATTKSVLVLIFMILATTSSTFA) is a signal peptide. The PNPLA domain occupies 32–230 (LSIDGGGIKG…TVADPALLSV (199 aa)). The GXGXXG signature appears at 36 to 41 (GGGIKG). A GXSXG motif is present at residues 75–79 (GTSTG). Ser-77 functions as the Nucleophile in the catalytic mechanism. 2 N-linked (GlcNAc...) asparagine glycosylation sites follow: Asn-115 and Asn-203. Residue Asp-216 is the Proton acceptor of the active site. Positions 216–218 (DGA) match the DGA/G motif.

The protein belongs to the patatin family. In terms of tissue distribution, tuber.

The protein localises to the vacuole. Probable lipolytic acyl hydrolase (LAH), an activity which is thought to be involved in the response of tubers to pathogens. The sequence is that of Patatin-05 (pat1-k1) from Solanum tuberosum (Potato).